Here is a 307-residue protein sequence, read N- to C-terminus: tRNA pseudouridine synthase B (307 aa).

Aspartate 41 (nucleophile) is an active-site residue.

Belongs to the pseudouridine synthase TruB family. Type 1 subfamily.

The enzyme catalyses uridine(55) in tRNA = pseudouridine(55) in tRNA. Functionally, responsible for synthesis of pseudouridine from uracil-55 in the psi GC loop of transfer RNAs. This is tRNA pseudouridine synthase B from Prochlorococcus marinus (strain MIT 9312).